The following is a 163-amino-acid chain: Putative 4-hydroxy-4-methyl-2-oxoglutarate aldolase (163 aa).

Substrate-binding positions include 75–78 and arginine 97; that span reads GDQL. Aspartate 98 contributes to the a divalent metal cation binding site.

Belongs to the class II aldolase/RraA-like family. Homotrimer. Requires a divalent metal cation as cofactor.

The catalysed reaction is 4-hydroxy-4-methyl-2-oxoglutarate = 2 pyruvate. It carries out the reaction oxaloacetate + H(+) = pyruvate + CO2. Functionally, catalyzes the aldol cleavage of 4-hydroxy-4-methyl-2-oxoglutarate (HMG) into 2 molecules of pyruvate. Also contains a secondary oxaloacetate (OAA) decarboxylase activity due to the common pyruvate enolate transition state formed following C-C bond cleavage in the retro-aldol and decarboxylation reactions. The protein is Putative 4-hydroxy-4-methyl-2-oxoglutarate aldolase of Photobacterium profundum (strain SS9).